Reading from the N-terminus, the 680-residue chain is Extracellular matrix protein 2 (680 aa).

An N-terminal signal peptide occupies residues 1-20 (MKFSSLYCFLLLLIFQTDFG). Residues 100-157 (GHCLANGMIMYNKAVWSPEPCTTCLCLNGKVLCDETKCHPQMCPQTIIPEGECCPVCS) form the VWFC domain. Over residues 189-198 (QLEEDEEEVK) the composition is skewed to acidic residues. The interval 189 to 293 (QLEEDEEEVK…RLPIPATPRG (105 aa)) is disordered. The segment covering 223-238 (QSREGKAQRPEEEGRQ) has biased composition (basic and acidic residues). Over residues 249-272 (NEEDDDEEEEDDDDEEEDDDDEDE) the composition is skewed to acidic residues. The Cell attachment site signature appears at 275–277 (RGD). Residues 288–325 (PATPRGIPSLPSMCSLSYKTISCISADLTQIPPLTAPE) enclose the LRRNT domain. LRR repeat units lie at residues 349 to 369 (NLER…GPKA), 375 to 396 (NLMR…LPST), 397 to 417 (LEEL…SLSD), 420 to 440 (QLVT…NSLA), 446 to 466 (SLSY…GLPA), 467 to 488 (SIEE…SFNH), 491 to 511 (KINV…APLA), 517 to 538 (NLES…LPKS), 539 to 559 (LVHL…VFGH), 563 to 583 (GLEY…DRVS), 590 to 611 (SLRE…VQEM), 613 to 634 (ALHF…QICN), and 642 to 665 (NLQH…AFSC). N-linked (GlcNAc...) asparagine glycosylation occurs at Asn-359. An N-linked (GlcNAc...) asparagine glycan is attached at Asn-430. Residue Asn-487 is glycosylated (N-linked (GlcNAc...) asparagine).

This sequence belongs to the small leucine-rich proteoglycan (SLRP) family. SLRP class I subfamily. In terms of assembly, interacts with numerous extracellular matrix proteins. Interacts with MSL1 and RASSF1.

The protein resides in the secreted. It localises to the extracellular space. The protein localises to the extracellular matrix. In terms of biological role, promotes matrix assembly and cell adhesiveness. The sequence is that of Extracellular matrix protein 2 (ECM2) from Bos taurus (Bovine).